Consider the following 275-residue polypeptide: T-cell ecto-ADP-ribosyltransferase 1 (275 aa).

The signal sequence occupies residues 1–20 (MPSNICKFFLTWWLIQQVTG). Cystine bridges form between Cys-41–Cys-243 and Cys-141–Cys-193. N-linked (GlcNAc...) asparagine glycosylation is present at Asn-58. The TR mART core domain occupies 61 to 238 (EKLKVAWEEA…IFLDSPKRKK (178 aa)). Residues Tyr-98, Arg-146, and Gln-164 each contribute to the NAD(+) site. Arg-146 is an active-site residue. Residue Ser-167 is part of the active site. Position 202 (Ser-202) interacts with NAD(+). Residue Glu-209 is part of the active site. Ser-246 carries GPI-anchor amidated serine lipidation. Positions 247–275 (SAGTRESCVSLFLVVLTSLLVQLLCLAEP) are cleaved as a propeptide — removed in mature form.

This sequence belongs to the Arg-specific ADP-ribosyltransferase family. Postthymic T-cells.

The protein localises to the cell membrane. The catalysed reaction is L-arginyl-[protein] + NAD(+) = N(omega)-(ADP-D-ribosyl)-L-arginyl-[protein] + nicotinamide + H(+). It catalyses the reaction NAD(+) + H2O = ADP-D-ribose + nicotinamide + H(+). Its function is as follows. Has NAD(+) glycohydrolase activity and extremely low ADP-ribosyltransferase activity. The chain is T-cell ecto-ADP-ribosyltransferase 1 (Art2a) from Rattus norvegicus (Rat).